The sequence spans 286 residues: Polygalacturonan/rhamnogalacturonan transport system permease protein YtcP (286 aa).

Helical transmembrane passes span 9-29, 69-89, 106-126, 131-151, 176-196, and 251-271; these read LIYGFLLMFALICVLPFIHVI, LLVSVFVTVIGTAVSMFLSSL, MFLVVFTMLFSGGMIPTFLVV, LLDSYWALILPTAINAFNLII, GIFFKIVLPLSLPAIATISLF, and TIKMAVIVVATIPVLLVYPFI. The region spanning 69–271 is the ABC transmembrane type-1 domain; it reads LLVSVFVTVI…IPVLLVYPFI (203 aa).

It belongs to the binding-protein-dependent transport system permease family. CysTW subfamily. As to quaternary structure, the complex is probably composed of two ATP-binding proteins (MsmX), two transmembrane proteins (YtcP and YteP) and a solute-binding protein (YtcQ).

The protein localises to the cell membrane. In terms of biological role, involved in pectin degradation. Part of the ABC transporter complex YtcQP-YteP involved in the uptake of polygalacturonan and rhamnogalacturonan type I. Responsible for the translocation of the substrate across the membrane. This chain is Polygalacturonan/rhamnogalacturonan transport system permease protein YtcP (ytcP), found in Bacillus subtilis (strain 168).